The sequence spans 1363 residues: Neurexin-1 (1363 aa).

Residues 1–1287 are Extracellular-facing; that stretch reads SKRRDMTVFS…EVIRESSSTT (1287 aa). The N-linked (GlcNAc...) asparagine glycan is linked to Asn-49. The 39-residue stretch at 67–105 folds into the EGF-like 1 domain; the sequence is QSRLCAREDVCLNGGVCSVLNDQAVCDCSQTGFRGKDCS. Disulfide bonds link Cys-71–Cys-83, Cys-77–Cys-92, and Cys-94–Cys-104. 2 consecutive Laminin G-like domains span residues 132 to 329 and 336 to 528; these read IATF…AFKC and DPIT…KPSC. Positions 178, 195, and 263 each coordinate Ca(2+). Intrachain disulfides connect Cys-293–Cys-329, Cys-499–Cys-528, Cys-536–Cys-547, Cys-541–Cys-556, and Cys-558–Cys-568. The EGF-like 2 domain maps to 532 to 569; sequence TAKPCLSNPCKNNGVCRDGWNRYVCDCSGTGYLGRSCE. Laminin G-like domains lie at 574-747 and 761-936; these read ILSY…IDYC and DPVT…ERGC. A glycan (N-linked (GlcNAc...) asparagine) is linked at Asn-646. 4 cysteine pairs are disulfide-bonded: Cys-908–Cys-936, Cys-943–Cys-954, Cys-948–Cys-963, and Cys-965–Cys-975. The EGF-like 3 domain maps to 939–976; that stretch reads PSTTCQEDSCANQGVCLQQWDGFSCDCSMTSFSGPLCN. Residues 982-1180 form the Laminin G-like 5 domain; it reads YIFSKGGGQI…DANIVIEGNV (199 aa). Asn-1079 carries an N-linked (GlcNAc...) asparagine glycan. Positions 1244-1280 are disordered; the sequence is CPSDDEDIDPCEPSSGGLANPTRAGGGREYPGSSEVI. A helical transmembrane segment spans residues 1288-1308; that stretch reads GMVVGIVAAAALCILILLYAM. Residues 1309–1363 lie on the Cytoplasmic side of the membrane; sequence YKYRNRDEGSYHVDESRNYISNSAQSNGAVIKEKQPNSAKSSNKNKKNKDKEYYV. The tract at residues 1330-1363 is disordered; it reads NSAQSNGAVIKEKQPNSAKSSNKNKKNKDKEYYV.

Belongs to the neurexin family. The cytoplasmic C-terminal region binds to CASK. The laminin G-like domain 1 binds to NXPH1. Specific isoforms bind to alpha-dystroglycan and to alpha-latrotoxin. N- and O-glycosylated.

It localises to the membrane. Its function is as follows. Neuronal cell surface protein that may be involved in cell recognition and cell adhesion. May mediate intracellular signaling. In Gallus gallus (Chicken), this protein is Neurexin-1 (NRXN1).